A 338-amino-acid chain; its full sequence is Protein WVD2-like 2 (338 aa).

Residues 1 to 14 (MGRELVDKHMDKKA) show a composition bias toward basic and acidic residues. The interval 1–150 (MGRELVDKHM…SFSVASSSAT (150 aa)) is disordered. Polar residues-rich tracts occupy residues 15-37 (NSLT…STNE) and 59-69 (QGITETPGSHK). Low complexity predominate over residues 100 to 115 (NNSLGNGASHNSSSAS). Basic and acidic residues predominate over residues 128–138 (RIPDHKMHHDE). Residues 177 to 214 (REFYQKLEEKQKALEAEKRENEKRLKEEQEAVTKQLRK) adopt a coiled-coil conformation. The interval 222 to 338 (PVPSFYQEGP…GENGVGVVEE (117 aa)) is disordered. Positions 288–300 (TNSVPRTPNSSSK) are enriched in polar residues.

Belongs to the TPX2 family. In terms of tissue distribution, expressed in seedlings.

It is found in the cytoplasm. It localises to the cytoskeleton. Its function is as follows. Microtubule-associated protein (MAP) that regulates the orientation of interphase cortical microtubules. The sequence is that of Protein WVD2-like 2 from Arabidopsis thaliana (Mouse-ear cress).